Consider the following 455-residue polypeptide: Exodeoxyribonuclease 7 large subunit (455 aa).

Belongs to the XseA family. Heterooligomer composed of large and small subunits.

Its subcellular location is the cytoplasm. It catalyses the reaction Exonucleolytic cleavage in either 5'- to 3'- or 3'- to 5'-direction to yield nucleoside 5'-phosphates.. Functionally, bidirectionally degrades single-stranded DNA into large acid-insoluble oligonucleotides, which are then degraded further into small acid-soluble oligonucleotides. The protein is Exodeoxyribonuclease 7 large subunit of Oceanobacillus iheyensis (strain DSM 14371 / CIP 107618 / JCM 11309 / KCTC 3954 / HTE831).